Here is a 326-residue protein sequence, read N- to C-terminus: tRNA-modifying protein YgfZ (326 aa).

Positions 27 and 189 each coordinate folate.

Belongs to the tRNA-modifying YgfZ family.

It is found in the cytoplasm. In terms of biological role, folate-binding protein involved in regulating the level of ATP-DnaA and in the modification of some tRNAs. It is probably a key factor in regulatory networks that act via tRNA modification, such as initiation of chromosomal replication. This chain is tRNA-modifying protein YgfZ, found in Escherichia coli O139:H28 (strain E24377A / ETEC).